The primary structure comprises 1578 residues: Pentafunctional AROM polypeptide (1578 aa).

The 3-dehydroquinate synthase stretch occupies residues 1-384; it reads MAEPTKIKIL…YEPKASVVPN (384 aa). NAD(+) is bound by residues 44-46, 81-84, 114-116, and Asp-119; these read DTN, EVSK, and GGV. Residue Arg-130 coordinates 7-phospho-2-dehydro-3-deoxy-D-arabino-heptonate. 139-140 lines the NAD(+) pocket; that stretch reads TT. Residues Asp-146 and Lys-152 each contribute to the 7-phospho-2-dehydro-3-deoxy-D-arabino-heptonate site. Lys-161 lines the NAD(+) pocket. Asn-162 lines the 7-phospho-2-dehydro-3-deoxy-D-arabino-heptonate pocket. Residues 179-182 and Asn-190 contribute to the NAD(+) site; that span reads FLET. Glu-194 contacts Zn(2+). Residues 194–197 and Lys-250 contribute to the 7-phospho-2-dehydro-3-deoxy-D-arabino-heptonate site; that span reads EVIK. Glu-260 serves as the catalytic Proton acceptor; for 3-dehydroquinate synthase activity. Residues 264–268 and His-271 each bind 7-phospho-2-dehydro-3-deoxy-D-arabino-heptonate; that span reads RNLLN. Residue His-271 participates in Zn(2+) binding. His-275 (proton acceptor; for 3-dehydroquinate synthase activity) is an active-site residue. 7-phospho-2-dehydro-3-deoxy-D-arabino-heptonate contacts are provided by His-287 and Lys-356. His-287 serves as a coordination point for Zn(2+). An EPSP synthase region spans residues 397 to 842; sequence VHPGVEPASN…WDTLRQKFSA (446 aa). Cys-824 (for EPSP synthase activity) is an active-site residue. Residues 864-1055 are shikimate kinase; it reads TASVFIIGMR…KRKKHSFFVS (192 aa). 871–878 serves as a coordination point for ATP; sequence GMRGAGKT. Residues 1056 to 1276 form a 3-dehydroquinase region; sequence LTLPDLRTAG…AAPGQLSATE (221 aa). Catalysis depends on His-1179, which acts as the Proton acceptor; for 3-dehydroquinate dehydratase activity. Residue Lys-1207 is the Schiff-base intermediate with substrate; for 3-dehydroquinate dehydratase activity of the active site. Residues 1289 to 1578 are shikimate dehydrogenase; that stretch reads QKKFAVFGTP…EDARAAVLSS (290 aa).

In the N-terminal section; belongs to the sugar phosphate cyclases superfamily. Dehydroquinate synthase family. It in the 2nd section; belongs to the EPSP synthase family. The protein in the 3rd section; belongs to the shikimate kinase family. This sequence in the 4th section; belongs to the type-I 3-dehydroquinase family. In the C-terminal section; belongs to the shikimate dehydrogenase family. In terms of assembly, homodimer. The cofactor is Zn(2+).

Its subcellular location is the cytoplasm. The catalysed reaction is 7-phospho-2-dehydro-3-deoxy-D-arabino-heptonate = 3-dehydroquinate + phosphate. The enzyme catalyses 3-dehydroquinate = 3-dehydroshikimate + H2O. It carries out the reaction shikimate + NADP(+) = 3-dehydroshikimate + NADPH + H(+). It catalyses the reaction shikimate + ATP = 3-phosphoshikimate + ADP + H(+). The catalysed reaction is 3-phosphoshikimate + phosphoenolpyruvate = 5-O-(1-carboxyvinyl)-3-phosphoshikimate + phosphate. Its pathway is metabolic intermediate biosynthesis; chorismate biosynthesis; chorismate from D-erythrose 4-phosphate and phosphoenolpyruvate: step 2/7. It functions in the pathway metabolic intermediate biosynthesis; chorismate biosynthesis; chorismate from D-erythrose 4-phosphate and phosphoenolpyruvate: step 3/7. It participates in metabolic intermediate biosynthesis; chorismate biosynthesis; chorismate from D-erythrose 4-phosphate and phosphoenolpyruvate: step 4/7. The protein operates within metabolic intermediate biosynthesis; chorismate biosynthesis; chorismate from D-erythrose 4-phosphate and phosphoenolpyruvate: step 5/7. Its pathway is metabolic intermediate biosynthesis; chorismate biosynthesis; chorismate from D-erythrose 4-phosphate and phosphoenolpyruvate: step 6/7. Functionally, the AROM polypeptide catalyzes 5 consecutive enzymatic reactions in prechorismate polyaromatic amino acid biosynthesis. In Aspergillus flavus (strain ATCC 200026 / FGSC A1120 / IAM 13836 / NRRL 3357 / JCM 12722 / SRRC 167), this protein is Pentafunctional AROM polypeptide.